Here is a 609-residue protein sequence, read N- to C-terminus: Spore coat protein homolog 1 (609 aa).

An N-terminal signal peptide occupies residues 1 to 17 (MKSLLFVVFIFLTTTYA). N-linked (GlcNAc...) asparagine glycans are attached at residues Asn82, Asn397, and Asn440. Residues 527–547 (TVTQVPEAPGTDGTPSESTAW) are disordered. Ser584 is lipidated: GPI-anchor amidated serine. A propeptide spans 585-609 (SSSIKRTPCILPLVILASTLFASFF) (removed in mature form).

It is found in the cell membrane. In terms of biological role, may play a role in cell adhesion. The protein is Spore coat protein homolog 1 of Rhizopus delemar (strain RA 99-880 / ATCC MYA-4621 / FGSC 9543 / NRRL 43880) (Mucormycosis agent).